Consider the following 144-residue polypeptide: MPTVNQLVRKGRTSAAKKYKAPALHYSFNSLRNKVAFGDGSPQKRGVCTQVKTTTPKKPNSALRKIARVRLSNHMEVTAYIPGEGHNLQEHSVVLIRGGRVPDLPGVRYHIIRGTLDTAGVANRQQGRSRYGAKKGKAAPAKKK.

At Asp-103 the chain carries 3-methylthioaspartic acid. The segment at 125 to 144 is disordered; the sequence is QQGRSRYGAKKGKAAPAKKK. Positions 131 to 144 are enriched in basic residues; it reads YGAKKGKAAPAKKK.

The protein belongs to the universal ribosomal protein uS12 family. In terms of assembly, part of the 30S ribosomal subunit. Contacts proteins S8 and S17. May interact with IF1 in the 30S initiation complex.

Its function is as follows. With S4 and S5 plays an important role in translational accuracy. Functionally, interacts with and stabilizes bases of the 16S rRNA that are involved in tRNA selection in the A site and with the mRNA backbone. Located at the interface of the 30S and 50S subunits, it traverses the body of the 30S subunit contacting proteins on the other side and probably holding the rRNA structure together. The combined cluster of proteins S8, S12 and S17 appears to hold together the shoulder and platform of the 30S subunit. In Dehalococcoides mccartyi (strain ATCC BAA-2100 / JCM 16839 / KCTC 5957 / BAV1), this protein is Small ribosomal subunit protein uS12.